Here is a 695-residue protein sequence, read N- to C-terminus: MAQLDTLDLVVLVALLVGSVAYFTKGTYWAVAKDPYASSGPAMNGAAKAGKTRDILEKMEETGKNCVIFYGSQTGTAEDYASRLAKEGSQRFGLKTMVADLEDYDYENLDKFPEDKVAFFVLATYGEGEPTDNAVEFYQFITGEDVAFESGASAEEKPLSALKYVTFGLGNNTYEHYNAMVRNLDAALQKLGAQRIGSAGEGDDGAGTMEEDFLAWKEPMWTALSEAMGLQEREAVYEPVFNVTEDESKSAEDETVYLGEPTKGHLEGQPKGPFSAHNPFIAPIVESRELFTVKDRNCLHMEISIAGSNLTYQTGDHIAVWPTNAGAEVDRFLQVFGLEEKRHSVINIKGIDVTAKVPIPTPTTYDAAVRYYMEVCAPVSRQFVSSLAAFAPDEATKTEIQRLGSDKDYFHEKITNQCFNIAQALQSITSKPFSAVPFSLLIEGLNKLQPRYYSISSSSLVQKDKISITAVVESVRLPGASHLVKGVTTNYLLALKQKQNGEPSPDPHGLTYAITGPRNKYDGIHVPVHVRHSNFKLPSDPSRPIIMVGPGTGVAPFRGFIQERAALAAKGEKVGTTVLFFGCRNRNEDFLYQDEFKAYEEQLGDSLKIITAFSRETSQKVYVQHRLREQAELVSDLLKQKATFYVCGDAANMAREVNLVLGQIIAQQRGLPAEKGEEMVKHMRSSGSYQEDVWS.

At 1–8 the chain is on the lumenal side; the sequence is MAQLDTLD. Residues 9 to 31 traverse the membrane as a helical segment; it reads LVVLVALLVGSVAYFTKGTYWAV. Residues 32–695 are Cytoplasmic-facing; it reads AKDPYASSGP…SGSYQEDVWS (664 aa). In terms of domain architecture, Flavodoxin-like spans 66–221; the sequence is CVIFYGSQTG…DFLAWKEPMW (156 aa). Residues 72 to 77, 123 to 126, 169 to 178, and Asp204 each bind FMN; these read SQTGTA, ATYG, and LGNNTYEHYN. The 262-residue stretch at 277–538 folds into the FAD-binding FR-type domain; it reads HNPFIAPIVE…HVRHSNFKLP (262 aa). Arg296 contributes to the NADP(+) binding site. FAD-binding positions include 451 to 454, 469 to 471, and 486 to 489; these read RYYS, TAV, and GVTT. NADP(+) contacts are provided by residues Thr552, 614–615, 620–624, and Glu656; these read SR and KVYVQ. Trp694 is a binding site for FAD.

This sequence belongs to the NADPH--cytochrome P450 reductase family. The protein in the N-terminal section; belongs to the flavodoxin family. In the C-terminal section; belongs to the flavoprotein pyridine nucleotide cytochrome reductase family. FAD serves as cofactor. Requires FMN as cofactor.

It is found in the endoplasmic reticulum membrane. Its subcellular location is the mitochondrion outer membrane. It localises to the cell membrane. It catalyses the reaction 2 oxidized [cytochrome P450] + NADPH = 2 reduced [cytochrome P450] + NADP(+) + H(+). Its function is as follows. This enzyme is required for electron transfer from NADP to cytochrome P450 in microsomes. It can also provide electron transfer to heme oxygenase and cytochrome B5. Involved in ergosterol biosynthesis. The chain is NADPH--cytochrome P450 reductase from Aspergillus oryzae (strain ATCC 42149 / RIB 40) (Yellow koji mold).